Reading from the N-terminus, the 442-residue chain is Serum response factor-binding protein 1 (442 aa).

2 coiled-coil regions span residues 55–77 and 118–140; these read EDAL…AMKE and LLKR…RQNA. Disordered stretches follow at residues 137–336 and 358–442; these read RQNA…LETH and FHSL…TFDD. Basic and acidic residues-rich tracts occupy residues 149-159 and 167-188; these read ASKESQCEDIP and ESQH…DPTT. Lysine 202 participates in a covalent cross-link: Glycyl lysine isopeptide (Lys-Gly) (interchain with G-Cter in SUMO2). Serine 215 is modified (phosphoserine). Positions 237 to 247 are enriched in polar residues; sequence GNHSQGKASTR. The span at 266–278 shows a compositional bias: acidic residues; the sequence is VSEEEKEYFDDST. Phosphoserine occurs at positions 277, 292, and 294. A Glycyl lysine isopeptide (Lys-Gly) (interchain with G-Cter in SUMO2) cross-link involves residue lysine 329. Serine 362 is subject to Phosphoserine. A compositionally biased stretch (basic and acidic residues) spans 367 to 382; that stretch reads SRRDPREQAPKNKAPD.

Interacts with SRF. Forms complexes with SRF and SRF cofactors ARID2, MYOCD and NKX2-5. Interacts with the N-terminus of SLC2A4.

It localises to the cytoplasm. The protein localises to the perinuclear region. May be involved in regulating transcriptional activation of cardiac genes during the aging process. May play a role in biosynthesis and/or processing of SLC2A4 in adipose cells. The chain is Serum response factor-binding protein 1 from Rattus norvegicus (Rat).